The following is a 492-amino-acid chain: G2/mitotic-specific cyclin CLB2 (492 aa).

The tract at residues 1-176 is disordered; that stretch reads MPQVTKTNNE…QPEVGERSQS (176 aa). Positions 23-33 are enriched in polar residues; the sequence is QESISTIKNTT. Low complexity predominate over residues 34–58; it reads ISNSQHKQQTQQQISSPPQVSVTSS. Residues 59 to 83 show a composition bias toward polar residues; it reads EGVSHVNTRQYLGDVSNQYITNAKP. Residues 111–135 are compositionally biased toward low complexity; sequence ASDNNNNGSTSSSSNSSNNNNNDAN. One can recognise a Cyclin N-terminal domain in the interval 208–334; sequence EIFSYYYELE…MLTILNFDLN (127 aa).

This sequence belongs to the cyclin family. Cyclin AB subfamily.

2/mitotic-specific cyclin essential for the control of the cell cycle at the G2/M (mitosis) transition. G2/M cyclins accumulate steadily during G2 and are abruptly destroyed at mitosis. Degradation is necessary for the cell to exit from mitosis. Plays a role in morphogenesis by negatively regulating polarized growth. Through binding to CDC28 regulates cytokinesis, partly by phosphorylation of the actomyosin ring component IQG1. Also involved in the phosphorylation of CDC6 and CDC54. The protein is G2/mitotic-specific cyclin CLB2 (CLB2) of Candida albicans (strain SC5314 / ATCC MYA-2876) (Yeast).